We begin with the raw amino-acid sequence, 1260 residues long: Myosin-1 (1260 aa).

The 680-residue stretch at 34–713 (VGVSDLTLLS…TLFALEHMRD (680 aa)) folds into the Myosin motor domain. 127-134 (GESGAGKT) contributes to the ATP binding site. Phosphoserine is present on Ser-355. An actin-binding region spans residues 402–484 (SIGILDIYGF…PGIFATLDDS (83 aa)). IQ domains follow at residues 717–737 (YNMA…RIDS) and 738–763 (AIKI…YGHR). The region spanning 769–959 (KERRAMSLLG…TISVRQGRPA (191 aa)) is the TH1 domain. Polar residues-rich tracts occupy residues 948-963 (SSTI…NSRQ) and 972-988 (TLLS…SKGY). Residues 948 to 1106 (SSTISVRQGR…PPPPTKQNIP (159 aa)) form a disordered region. Residues 989 to 1013 (GQQQHAQPSYGQQQQQQQRYAPQSH) are compositionally biased toward low complexity. Over residues 1030–1064 (QQNFAASAAQTAYHPQQASHARVPSTNNAHTQHNR) the composition is skewed to polar residues. The segment covering 1065 to 1082 (QPAQQAAQPVQQAAQPAA) has biased composition (low complexity). Residues 1092 to 1101 (APPPPPPPPT) are compositionally biased toward pro residues. The region spanning 1103 to 1165 (QNIPKFQAAY…PTNYIVEYKE (63 aa)) is the SH3 domain.

Belongs to the TRAFAC class myosin-kinesin ATPase superfamily. Myosin family. In terms of processing, phosphorylation of the TEDS site (Ser-355) is required for the polarization of the actin cytoskeleton. Phosphorylation probably activates the myosin-I ATPase activity.

It is found in the cytoplasm. Its subcellular location is the cytoskeleton. The protein localises to the actin patch. Type-I myosin implicated in the organization of the actin cytoskeleton. Required for proper actin cytoskeleton polarization. At the cell cortex, assembles in patch-like structures together with proteins from the actin-polymerizing machinery and promotes actin assembly. Functions as actin nucleation-promoting factor (NPF) for the Arp2/3 complex. This Kluyveromyces lactis (strain ATCC 8585 / CBS 2359 / DSM 70799 / NBRC 1267 / NRRL Y-1140 / WM37) (Yeast) protein is Myosin-1 (MYO1).